We begin with the raw amino-acid sequence, 189 residues long: Potassium-transporting ATPase KdpC subunit (189 aa).

A helical transmembrane segment spans residues 8-28 (LVMLILLTLITGIAYPLLTTG).

This sequence belongs to the KdpC family. The system is composed of three essential subunits: KdpA, KdpB and KdpC.

It is found in the cell inner membrane. In terms of biological role, part of the high-affinity ATP-driven potassium transport (or Kdp) system, which catalyzes the hydrolysis of ATP coupled with the electrogenic transport of potassium into the cytoplasm. This subunit acts as a catalytic chaperone that increases the ATP-binding affinity of the ATP-hydrolyzing subunit KdpB by the formation of a transient KdpB/KdpC/ATP ternary complex. The sequence is that of Potassium-transporting ATPase KdpC subunit from Serratia proteamaculans (strain 568).